The sequence spans 475 residues: Aspartyl/glutamyl-tRNA(Asn/Gln) amidotransferase subunit B (475 aa).

This sequence belongs to the GatB/GatE family. GatB subfamily. As to quaternary structure, heterotrimer of A, B and C subunits.

The catalysed reaction is L-glutamyl-tRNA(Gln) + L-glutamine + ATP + H2O = L-glutaminyl-tRNA(Gln) + L-glutamate + ADP + phosphate + H(+). It carries out the reaction L-aspartyl-tRNA(Asn) + L-glutamine + ATP + H2O = L-asparaginyl-tRNA(Asn) + L-glutamate + ADP + phosphate + 2 H(+). In terms of biological role, allows the formation of correctly charged Asn-tRNA(Asn) or Gln-tRNA(Gln) through the transamidation of misacylated Asp-tRNA(Asn) or Glu-tRNA(Gln) in organisms which lack either or both of asparaginyl-tRNA or glutaminyl-tRNA synthetases. The reaction takes place in the presence of glutamine and ATP through an activated phospho-Asp-tRNA(Asn) or phospho-Glu-tRNA(Gln). This is Aspartyl/glutamyl-tRNA(Asn/Gln) amidotransferase subunit B from Bacillus cereus (strain G9842).